We begin with the raw amino-acid sequence, 418 residues long: FXa-directed anticoagulant (418 aa).

Residues 1–19 (MNLKIAIIVICQLVYFTQG) form the signal peptide. 3 N-linked (GlcNAc...) asparagine glycosylation sites follow: Asn117, Asn167, and Asn286.

This sequence belongs to the serpin family. Interacts with host coagulation factor X/F10 (activated). Female salivary gland (at protein level).

It localises to the secreted. Anticoagulant and antithrombotic serpin-type protein inhibiting host coagulation factor Xa (F10). Does not inhibit host uPA/urokinase-type plasminogen activator (PLAU), kallikrein, granzyme B (GZMB), matriptase, elastase, alpha-chymotrypsin, chymase, coagulation factor XIIa (F12), coagulation factor XIa (F11), plasmin (PLG), thrombin (F2), trypsin and cathepsin G (CTSG). Inhibits factor Xa-induced production of pro-inflammatory cytokines, such as MCP-1/CCL2, TNF-alpha/TNF, IL-1beta/IL1B, IL6, IL8/CXCL8 and IL18, in human endothelial cells. Inhibits factor Xa-induced up-regulation of protease-activated receptors (PARs) F2R, F2RL1 and F2RL2 in human endothelial cells. Prevents activation of host F2RL1 via inhibition of F2RL1 cleavage by host factor Xa. Inhibits factor Xa-induced up-regulation of adhesion molecules ICAM1 and VCAM1 in human endothelial cells. Inhibits factor Xa-induced up-regulation of phosphorylated ERK1/2 in human endothelial cells. Inhibits factor Xa-induced activation of transcription factor NF-kappa-B in human endothelial cells. Reduces factor Xa-induced edema in the host. Reduces factor Xa-induced endothelial permeability in the host. This chain is FXa-directed anticoagulant, found in Aedes albopictus (Asian tiger mosquito).